Here is a 160-residue protein sequence, read N- to C-terminus: Transcription elongation factor GreA (160 aa).

This sequence belongs to the GreA/GreB family.

Necessary for efficient RNA polymerase transcription elongation past template-encoded arresting sites. The arresting sites in DNA have the property of trapping a certain fraction of elongating RNA polymerases that pass through, resulting in locked ternary complexes. Cleavage of the nascent transcript by cleavage factors such as GreA or GreB allows the resumption of elongation from the new 3'terminus. GreA releases sequences of 2 to 3 nucleotides. The polypeptide is Transcription elongation factor GreA (Francisella philomiragia subsp. philomiragia (strain ATCC 25017 / CCUG 19701 / FSC 153 / O#319-036)).